Consider the following 692-residue polypeptide: DNA ligase (692 aa).

NAD(+) is bound by residues 35 to 39, 88 to 89, and Glu-117; these read DLVYD and SL. The active-site N6-AMP-lysine intermediate is the Lys-119. Arg-140, Glu-176, Lys-301, and Lys-325 together coordinate NAD(+). Residues Cys-416, Cys-419, Cys-434, and Cys-439 each coordinate Zn(2+). One can recognise a BRCT domain in the interval 611–692; the sequence is LTNQSNSWAS…FDLIKNSKKT (82 aa).

It belongs to the NAD-dependent DNA ligase family. LigA subfamily. Requires Mg(2+) as cofactor. Mn(2+) serves as cofactor.

It carries out the reaction NAD(+) + (deoxyribonucleotide)n-3'-hydroxyl + 5'-phospho-(deoxyribonucleotide)m = (deoxyribonucleotide)n+m + AMP + beta-nicotinamide D-nucleotide.. In terms of biological role, DNA ligase that catalyzes the formation of phosphodiester linkages between 5'-phosphoryl and 3'-hydroxyl groups in double-stranded DNA using NAD as a coenzyme and as the energy source for the reaction. It is essential for DNA replication and repair of damaged DNA. This Mesomycoplasma hyopneumoniae (strain 232) (Mycoplasma hyopneumoniae) protein is DNA ligase.